The chain runs to 260 residues: E3 ubiquitin-protein ligase SRFP1 (260 aa).

Residues 11–80 form a CHY-type zinc finger; that stretch reads FGRMGFGCKH…VAQVCYNCGV (70 aa). Residues cysteine 18, histidine 20, cysteine 31, cysteine 32, cysteine 38, cysteine 41, histidine 42, histidine 50, cysteine 62, cysteine 65, cysteine 75, cysteine 78, cysteine 87, cysteine 90, histidine 103, cysteine 104, cysteine 107, cysteine 110, histidine 120, cysteine 121, cysteine 124, cysteine 127, histidine 136, and cysteine 138 each contribute to the Zn(2+) site. The segment at 82-146 adopts a CTCHY-type zinc-finger fold; that stretch reads MGEYFCSACK…CCIENSMKNN (65 aa). The segment at 147 to 190 adopts an RING-type; atypical zinc-finger fold; the sequence is CPICYEYLFDSLRETSVLRCGHTMHLQCFHEMLKHDKFSCPICS.

Expressed in roots, leaves, nodes and panicles.

It is found in the nucleus. It localises to the cytoplasm. It carries out the reaction S-ubiquitinyl-[E2 ubiquitin-conjugating enzyme]-L-cysteine + [acceptor protein]-L-lysine = [E2 ubiquitin-conjugating enzyme]-L-cysteine + N(6)-ubiquitinyl-[acceptor protein]-L-lysine.. Its pathway is protein modification; protein ubiquitination. Functionally, possesses E3 ubiquitin-protein ligase activity in vitro. Possesses transactivation activity in yeast cells. May modulate abiotic stress responses by negatively regulating antioxidant enzymes-mediated reactive oxygen species (ROS) removal. This chain is E3 ubiquitin-protein ligase SRFP1, found in Oryza sativa subsp. japonica (Rice).